A 170-amino-acid polypeptide reads, in one-letter code: Calcineurin subunit B type 1 (170 aa).

G2 carries the N-myristoyl glycine lipid modification. EF-hand domains lie at 18–46, 50–85, 87–122, and 128–163; these read DEIK…FMSL, QQNP…FSVK, DKEQ…MVGN, and QLQQ…LDIH. Ca(2+)-binding residues include D31, D33, S35, S37, E42, D63, D65, N67, E69, E74, D100, D102, D104, Y106, and E111. A Phosphotyrosine modification is found at Y106. The interval 131–136 is calcineurin A binding; it reads QIVDKT. Ca(2+) contacts are provided by D141, D143, D145, R147, and E152.

The protein belongs to the calcineurin regulatory subunit family. In terms of assembly, forms a complex composed of a calmodulin-dependent catalytic subunit (also known as calcineurin A) and a regulatory Ca(2+)-binding subunit (also known as calcineurin B). There are three catalytic subunits, each encoded by a separate gene (PPP3CA, PPP3CB, and PPP3CC) and two regulatory subunits which are also encoded by separate genes (PPP3R1 and PPP3R2). The interaction between the 2 subunits is Ca(2+)-independent. Interacts with catalytic subunit PPP3CA/calcineurin A. Interacts with catalytic subunit PPP3CB/calcineurin A. Interacts with CIB1 (via C-terminal region); the interaction increases upon cardiomyocyte hypertrophy. Interacts with RCAN1. Interacts with SPATA33 (via PQIIIT motif).

The protein resides in the cytoplasm. It localises to the cytosol. The protein localises to the cell membrane. It is found in the sarcolemma. In terms of biological role, regulatory subunit of calcineurin, a calcium-dependent, calmodulin stimulated protein phosphatase. Confers calcium sensitivity. The polypeptide is Calcineurin subunit B type 1 (PPP3R1) (Bos taurus (Bovine)).